The chain runs to 343 residues: Mitotic checkpoint protein bub-3 (343 aa).

WD repeat units follow at residues 21–62 (PPFV…DISE), 67–105 (THGK…GTQL), 107–146 (SHAL…NGAI), 150–187 (NVSS…EPLQ), 192–232 (PLKY…EMMK), 249–288 (ELIH…RIIQ), and 291–331 (KFET…NSIT). The interval 322–343 (PSPLPNNSITIRHITDPESRPK) is disordered. The span at 334–343 (HITDPESRPK) shows a compositional bias: basic and acidic residues.

The protein belongs to the WD repeat BUB3 family. As to quaternary structure, may interact with bub-1; for localization at the kinetochore and the onset of anaphase.

The protein resides in the chromosome. The protein localises to the centromere. It is found in the kinetochore. Its subcellular location is the nucleus. Has a dual function in spindle-assembly checkpoint signaling and in promoting the establishment of correct kinetochore-microtubule (K-MT) attachments. Promotes the formation of stable end-on bipolar attachments of chromosomes. Necessary for expression and kinetochore localization of bub-1. Plays a role in synapsis checkpoint signaling inducing apoptosis in response to unsynapsed chromosomes and thus controlling chromosomal segregation during oocyte meiosis. The sequence is that of Mitotic checkpoint protein bub-3 from Caenorhabditis elegans.